Consider the following 107-residue polypeptide: Large ribosomal subunit protein uL23 (107 aa).

It belongs to the universal ribosomal protein uL23 family. Part of the 50S ribosomal subunit. Contacts protein L29, and trigger factor when it is bound to the ribosome.

Its function is as follows. One of the early assembly proteins it binds 23S rRNA. One of the proteins that surrounds the polypeptide exit tunnel on the outside of the ribosome. Forms the main docking site for trigger factor binding to the ribosome. The chain is Large ribosomal subunit protein uL23 from Gluconobacter oxydans (strain 621H) (Gluconobacter suboxydans).